The primary structure comprises 1063 residues: NAD-specific glutamate dehydrogenase (1063 aa).

This sequence belongs to the Glu/Leu/Phe/Val dehydrogenases family. Highly divergent. As to quaternary structure, homotetramer.

The enzyme catalyses L-glutamate + NAD(+) + H2O = 2-oxoglutarate + NH4(+) + NADH + H(+). Its activity is regulated as follows. Allosterically activated by NADP(+). In Achlya klebsiana, this protein is NAD-specific glutamate dehydrogenase.